A 466-amino-acid polypeptide reads, in one-letter code: Soluble pyridine nucleotide transhydrogenase (466 aa).

36-45 (EKESSVGGGC) provides a ligand contact to FAD.

It belongs to the class-I pyridine nucleotide-disulfide oxidoreductase family. It depends on FAD as a cofactor.

The protein resides in the cytoplasm. It carries out the reaction NAD(+) + NADPH = NADH + NADP(+). Its function is as follows. Conversion of NADPH, generated by peripheral catabolic pathways, to NADH, which can enter the respiratory chain for energy generation. The protein is Soluble pyridine nucleotide transhydrogenase of Vibrio vulnificus (strain CMCP6).